The sequence spans 616 residues: UvrABC system protein C (616 aa).

Residues 12-91 (ESPGVYLWKD…IKEYHPRFNI (80 aa)) enclose the GIY-YIG domain. Residues 202-237 (SDVMHHVRERMLDASERLDFERAAELRDALAHLEKM) enclose the UVR domain.

It belongs to the UvrC family. Interacts with UvrB in an incision complex.

The protein resides in the cytoplasm. In terms of biological role, the UvrABC repair system catalyzes the recognition and processing of DNA lesions. UvrC both incises the 5' and 3' sides of the lesion. The N-terminal half is responsible for the 3' incision and the C-terminal half is responsible for the 5' incision. This chain is UvrABC system protein C, found in Gemmatimonas aurantiaca (strain DSM 14586 / JCM 11422 / NBRC 100505 / T-27).